Reading from the N-terminus, the 422-residue chain is UPF0761 membrane protein XAC0937 (422 aa).

The next 6 membrane-spanning stretches (helical) occupy residues V45 to F65, F102 to E122, G151 to F171, L179 to I199, A213 to F233, and A247 to L267.

It belongs to the UPF0761 family.

Its subcellular location is the cell inner membrane. This Xanthomonas axonopodis pv. citri (strain 306) protein is UPF0761 membrane protein XAC0937.